The primary structure comprises 372 residues: Chaperone protein DnaJ (372 aa).

The J domain occupies 5–69; it reads DYYEVLGVSK…DKRKQYDQFG (65 aa). The segment at 139-221 adopts a CR-type zinc-finger fold; it reads GVDKIIELDL…CKGKGKYLER (83 aa). Zn(2+)-binding residues include C152, C155, C169, C172, C195, C198, C209, and C212. CXXCXGXG motif repeat units lie at residues 152–159, 169–176, 195–202, and 209–216; these read CSACFGSG, CNNCHGTG, CNVCNGAG, and CKNCKGKG.

Belongs to the DnaJ family. Homodimer. The cofactor is Zn(2+).

It is found in the cytoplasm. Functionally, participates actively in the response to hyperosmotic and heat shock by preventing the aggregation of stress-denatured proteins and by disaggregating proteins, also in an autonomous, DnaK-independent fashion. Unfolded proteins bind initially to DnaJ; upon interaction with the DnaJ-bound protein, DnaK hydrolyzes its bound ATP, resulting in the formation of a stable complex. GrpE releases ADP from DnaK; ATP binding to DnaK triggers the release of the substrate protein, thus completing the reaction cycle. Several rounds of ATP-dependent interactions between DnaJ, DnaK and GrpE are required for fully efficient folding. Also involved, together with DnaK and GrpE, in the DNA replication of plasmids through activation of initiation proteins. The polypeptide is Chaperone protein DnaJ (Mycoplasma capricolum subsp. capricolum (strain California kid / ATCC 27343 / NCTC 10154)).